The following is an 87-amino-acid chain: Small ribosomal subunit protein bS20 (87 aa).

The protein belongs to the bacterial ribosomal protein bS20 family.

Functionally, binds directly to 16S ribosomal RNA. The protein is Small ribosomal subunit protein bS20 of Alkaliphilus metalliredigens (strain QYMF).